The sequence spans 610 residues: MEESETVLKLRRQLKEAEEERVKAAHYGLELLESQSDLQNQLEEQRNEMTGTIENLEQEKYSLQREVELKNRMLESLTSECENIRQQQKLSLEQLEEQLERNHHRELSEIKDKLEKLKAELDEARLSEKQLKHKLDYQTEVLANKSEELRMMSERVHETMSSEMLTLQLEKTELETAKDNLEQELNELQYREQQLLLTNGNQSRQLERLQTEKEEREKEAVGYFSALEKAREANQDLQAQLDIALQQAQDPNSKGNSLFAEVEDRRSEMERQLISMKVQFQSLQKQHAFSRQQMHRMKIQIATLLQLKGSHSDPEQLERLQAMVAQKNSEIETLVMKVRQLEKSQQICENGPVASSCDGLGQGDETYYVDLLKMKLVNSSKEIDKVKDELSLQRMKALAESQRVLELERKLFTNDRHLKLSQGENMKLRVNLDEMKMKYEPDEMGKIRTQKRRKEQLPLDCLIDNTSVAVTSGTEAHGVSDATPGETCTAESSDDKKLPKEDLSLSTKDQDPSSVLLKPNEPPNGQPPKERKRVRIMEDEKDTPDLNKRNPNNCTITSIHPRSTYEESTSELKKVDEEQEKRKQERKSRLRAPPVLHVPSKPATAQCPQQ.

A coiled-coil region spans residues 1–392; the sequence is MEESETVLKL…IDKVKDELSL (392 aa). A disordered region spans residues 474-610; sequence TEAHGVSDAT…KPATAQCPQQ (137 aa). Basic and acidic residues-rich tracts occupy residues 493-511 and 535-548; these read SDDK…KDQD and RIME…DLNK. Over residues 549–561 the composition is skewed to polar residues; that stretch reads RNPNNCTITSIHP. Residues 570-583 show a composition bias toward basic and acidic residues; the sequence is SELKKVDEEQEKRK.

It belongs to the Spindly family.

Its subcellular location is the chromosome. It is found in the centromere. It localises to the kinetochore. Required for the localization of dynein and dynactin to the mitotic kintochore. Dynein is believed to control the initial lateral interaction between the kinetochore and spindle microtubules and to facilitate the subsequent formation of end-on kinetochore-microtubule attachments mediated by the NDC80 complex. In Xenopus laevis (African clawed frog), this protein is Protein Spindly-B (spdl1-b).